The following is a 454-amino-acid chain: Chromosomal replication initiator protein DnaA (454 aa).

The segment at 1-80 is domain I, interacts with DnaA modulators; the sequence is MNLSNLWQSC…NPELRISLKE (80 aa). Residues 80 to 117 form a domain II region; that stretch reads EGVKPAPKIVESTPNTSLRSESAVDFQAESSASVKFES. The tract at residues 118-335 is domain III, AAA+ region; it reads HLNTKHLFDN…GALNRVKAMQ (218 aa). Glycine 163, glycine 165, lysine 166, and threonine 167 together coordinate ATP. The tract at residues 336–454 is domain IV, binds dsDNA; the sequence is DFKGGDIDID…WANLIRTLSA (119 aa).

This sequence belongs to the DnaA family. As to quaternary structure, oligomerizes as a right-handed, spiral filament on DNA at oriC.

Its subcellular location is the cytoplasm. Plays an essential role in the initiation and regulation of chromosomal replication. ATP-DnaA binds to the origin of replication (oriC) to initiate formation of the DNA replication initiation complex once per cell cycle. Binds the DnaA box (a 9 base pair repeat at the origin) and separates the double-stranded (ds)DNA. Forms a right-handed helical filament on oriC DNA; dsDNA binds to the exterior of the filament while single-stranded (ss)DNA is stabiized in the filament's interior. The ATP-DnaA-oriC complex binds and stabilizes one strand of the AT-rich DNA unwinding element (DUE), permitting loading of DNA polymerase. After initiation quickly degrades to an ADP-DnaA complex that is not apt for DNA replication. Binds acidic phospholipids. The polypeptide is Chromosomal replication initiator protein DnaA (Haemophilus influenzae (strain ATCC 51907 / DSM 11121 / KW20 / Rd)).